Reading from the N-terminus, the 115-residue chain is Nitrogen regulatory protein P-II 2 (115 aa).

The residue at position 54 (Y54) is an O-UMP-tyrosine.

Belongs to the P(II) protein family.

Functionally, could be involved in the regulation of nitrogen fixation. In Methanothermobacter thermautotrophicus (strain ATCC 29096 / DSM 1053 / JCM 10044 / NBRC 100330 / Delta H) (Methanobacterium thermoautotrophicum), this protein is Nitrogen regulatory protein P-II 2.